Here is a 444-residue protein sequence, read N- to C-terminus: Phosphoglucosamine mutase (444 aa).

S102 functions as the Phosphoserine intermediate in the catalytic mechanism. The Mg(2+) site is built by S102, D239, D241, and D243. At S102 the chain carries Phosphoserine.

It belongs to the phosphohexose mutase family. Mg(2+) serves as cofactor. In terms of processing, activated by phosphorylation.

It catalyses the reaction alpha-D-glucosamine 1-phosphate = D-glucosamine 6-phosphate. In terms of biological role, catalyzes the conversion of glucosamine-6-phosphate to glucosamine-1-phosphate. In Mycolicibacterium paratuberculosis (strain ATCC BAA-968 / K-10) (Mycobacterium paratuberculosis), this protein is Phosphoglucosamine mutase.